A 110-amino-acid chain; its full sequence is ORC1-type DNA replication protein 3 (110 aa).

8–12 (SGKSL) contacts ATP.

This sequence belongs to the CDC6/cdc18 family.

In terms of biological role, involved in regulation of DNA replication. The protein is ORC1-type DNA replication protein 3 (orc3) of Halobacterium salinarum (strain ATCC 700922 / JCM 11081 / NRC-1) (Halobacterium halobium).